The chain runs to 313 residues: Cobalamin biosynthesis protein CobD (313 aa).

5 helical membrane-spanning segments follow: residues 52–72 (VAGA…GAAL), 79–99 (CWPV…TSLA), 154–174 (VVPL…YRAI), 204–224 (YVGA…VGGS), and 289–309 (AVVL…MLVY).

It belongs to the CobD/CbiB family.

It localises to the cell membrane. Its pathway is cofactor biosynthesis; adenosylcobalamin biosynthesis. Functionally, converts cobyric acid to cobinamide by the addition of aminopropanol on the F carboxylic group. This Mycobacterium bovis (strain ATCC BAA-935 / AF2122/97) protein is Cobalamin biosynthesis protein CobD.